A 330-amino-acid chain; its full sequence is Aspartate--ammonia ligase (330 aa).

The protein belongs to the class-II aminoacyl-tRNA synthetase family. AsnA subfamily.

The protein localises to the cytoplasm. It catalyses the reaction L-aspartate + NH4(+) + ATP = L-asparagine + AMP + diphosphate + H(+). Its pathway is amino-acid biosynthesis; L-asparagine biosynthesis; L-asparagine from L-aspartate (ammonia route): step 1/1. The polypeptide is Aspartate--ammonia ligase (Escherichia coli O17:K52:H18 (strain UMN026 / ExPEC)).